Consider the following 264-residue polypeptide: MRPRMKYSNSKISPAKCDSTSGRALVPPCKITRSQQKTKDICHVYCMRLRSGLTIRKETCYFGKEPAKRYSLKSGSKHEGRLSTCLPDSRKRSLLGSIQAFAASVDTLSIQGTSLLTESCALSTYNDQSVSFVLENGCYVINVEDCGKNQEKDKVLLRYYESSFPAQSGDGVDGKKLMVNMSPIKDTDIWLNANDKDYSVELQKGDVSPPDQAFFVLHKKSSDFVSFECKNLPGTYIGVKDNQLALVEENDESCNNIMFKLSKM.

A homeodomain-like HTH domain region spans residues 1 to 67 (MRPRMKYSNS…ETCYFGKEPA (67 aa)). A propeptide spanning residues 1 to 101 (MRPRMKYSNS…RSLLGSIQAF (101 aa)) is cleaved from the precursor. The segment at 66–108 (PAKRYSLKSGSKHEGRLSTCLPDSRKRSLLGSIQAFAASVDTL) is interaction with RELA.

The protein belongs to the IL-1 family. Highly divergent. Forms a 1:1:1 heterotrimeric complex with its primary high-affinity receptor IL1RL1 and the coreceptor IL1RAP. Interacts with cargo receptor TMED10; the interaction mediates the translocation from the cytoplasm into the ERGIC (endoplasmic reticulum-Golgi intermediate compartment) and thereby secretion. Post-translationally, the full-length protein can be released from cells and is able to signal via the IL1RL1/ST2 receptor. However, proteolytic processing by CELA1, CSTG/cathepsin G and ELANE/neutrophil elastase produces C-terminal peptides that are more active than the unprocessed full-length protein. May also be proteolytically processed by calpains. Proteolytic cleavage mediated by apoptotic caspases including CASP3 and CASP7 results in IL33 inactivation. In vitro proteolytic cleavage by CASP1 was reported but could not be confirmed in vivo suggesting that IL33 is probably not a direct substrate for that caspase.

The protein localises to the nucleus. It localises to the chromosome. Its subcellular location is the cytoplasm. It is found in the cytoplasmic vesicle. The protein resides in the secretory vesicle. The protein localises to the secreted. Its function is as follows. Cytokine that binds to and signals through the IL1RL1/ST2 receptor which in turn activates NF-kappa-B and MAPK signaling pathways in target cells. Involved in the maturation of Th2 cells inducing the secretion of T-helper type 2-associated cytokines. Also involved in activation of mast cells, basophils, eosinophils and natural killer cells. Acts as a chemoattractant for Th2 cells, and may function as an 'alarmin', that amplifies immune responses during tissue injury. Induces rapid UCP2-dependent mitochondrial rewiring that attenuates the generation of reactive oxygen species and preserves the integrity of Krebs cycle required for persistent production of itaconate and subsequent GATA3-dependent differentiation of inflammation-resolving alternatively activated macrophages. In quiescent endothelia the uncleaved form is constitutively and abundantly expressed, and acts as a chromatin-associated nuclear factor with transcriptional repressor properties, it may sequester nuclear NF-kappaB/RELA, lowering expression of its targets. This form is rapidely lost upon angiogenic or pro-inflammatory activation. In Rattus norvegicus (Rat), this protein is Interleukin-33.